The sequence spans 416 residues: RNA-editing ligase 2, mitochondrial (416 aa).

A mitochondrion-targeting transit peptide spans 1–17 (MLRRLGVRHFRRTPLLF). Residues 29-31 (TEI), 56-62 (EKVHGAN), Arg-79, Glu-126, Phe-173, and 269-271 (KFK) contribute to the ATP site. The N6-AMP-lysine intermediate role is filled by Lys-57.

It belongs to the RNA ligase 2 family. Component of the RNA editing complex, a 1600 kDa complex composed of at least 20 proteins.

The protein resides in the mitochondrion. The enzyme catalyses ATP + (ribonucleotide)n-3'-hydroxyl + 5'-phospho-(ribonucleotide)m = (ribonucleotide)n+m + AMP + diphosphate.. Its function is as follows. RNA editing in kinetoplastid mitochondria inserts and deletes uridylates at multiple sites in pre-mRNAs as directed by guide RNAs. The chain is RNA-editing ligase 2, mitochondrial (REL2) from Trypanosoma brucei brucei (strain 927/4 GUTat10.1).